The primary structure comprises 661 residues: UvrABC system protein B (661 aa).

Positions lysine 26–arginine 413 constitute a Helicase ATP-binding domain. Glycine 39–threonine 46 provides a ligand contact to ATP. The Beta-hairpin signature appears at tyrosine 92–isoleucine 115. Residues glutamine 430 to isoleucine 596 form the Helicase C-terminal domain. A UVR domain is found at glutamine 625–glutamate 660.

This sequence belongs to the UvrB family. As to quaternary structure, forms a heterotetramer with UvrA during the search for lesions. Interacts with UvrC in an incision complex.

It is found in the cytoplasm. Its function is as follows. The UvrABC repair system catalyzes the recognition and processing of DNA lesions. A damage recognition complex composed of 2 UvrA and 2 UvrB subunits scans DNA for abnormalities. Upon binding of the UvrA(2)B(2) complex to a putative damaged site, the DNA wraps around one UvrB monomer. DNA wrap is dependent on ATP binding by UvrB and probably causes local melting of the DNA helix, facilitating insertion of UvrB beta-hairpin between the DNA strands. Then UvrB probes one DNA strand for the presence of a lesion. If a lesion is found the UvrA subunits dissociate and the UvrB-DNA preincision complex is formed. This complex is subsequently bound by UvrC and the second UvrB is released. If no lesion is found, the DNA wraps around the other UvrB subunit that will check the other stand for damage. The protein is UvrABC system protein B of Bacillus subtilis (strain 168).